The chain runs to 192 residues: Ion-translocating oxidoreductase complex subunit B (192 aa).

The tract at residues 1–26 (MNAIWIAVAAVSLLGLAFGAILGYAS) is hydrophobic. The 60-residue stretch at 32 to 91 (EDDPVVEKIDEILPQSQCGQCGYPGCRPYAEAISCNGEKINRCAPGGEAVMLKIAELLNV) folds into the 4Fe-4S domain. Residues C49, C52, C57, C74, C117, C120, C123, C127, C147, C150, C153, and C157 each contribute to the [4Fe-4S] cluster site. 2 4Fe-4S ferredoxin-type domains span residues 108–137 (MVAF…GATR) and 138–167 (AMHT…LQPV).

This sequence belongs to the 4Fe4S bacterial-type ferredoxin family. RnfB subfamily. The complex is composed of six subunits: RsxA, RsxB, RsxC, RsxD, RsxE and RsxG. [4Fe-4S] cluster serves as cofactor.

It is found in the cell inner membrane. Its function is as follows. Part of a membrane-bound complex that couples electron transfer with translocation of ions across the membrane. Required to maintain the reduced state of SoxR. This chain is Ion-translocating oxidoreductase complex subunit B, found in Escherichia coli O17:K52:H18 (strain UMN026 / ExPEC).